A 374-amino-acid polypeptide reads, in one-letter code: Tetraacyldisaccharide 4'-kinase (374 aa).

Thr43–Thr50 is an ATP binding site.

This sequence belongs to the LpxK family.

It carries out the reaction a lipid A disaccharide + ATP = a lipid IVA + ADP + H(+). Its pathway is glycolipid biosynthesis; lipid IV(A) biosynthesis; lipid IV(A) from (3R)-3-hydroxytetradecanoyl-[acyl-carrier-protein] and UDP-N-acetyl-alpha-D-glucosamine: step 6/6. Functionally, transfers the gamma-phosphate of ATP to the 4'-position of a tetraacyldisaccharide 1-phosphate intermediate (termed DS-1-P) to form tetraacyldisaccharide 1,4'-bis-phosphate (lipid IVA). This is Tetraacyldisaccharide 4'-kinase from Leptospira biflexa serovar Patoc (strain Patoc 1 / Ames).